A 1398-amino-acid chain; its full sequence is Pyrolysin (1398 aa).

A signal peptide spans 1–26 (MNKKGLTVLFIAIMLLSVVPVHFVSA). Residues 27–149 (GTPPVSSENS…KTKEPSLEPK (123 aa)) constitute a propeptide that is removed on maturation. Asn152 carries N-linked (GlcNAc...) asparagine glycosylation. The region spanning 154 to 656 (TWVINALQFI…HGLVNVTKSW (503 aa)) is the Peptidase S8 domain. Asp179 (charge relay system) is an active-site residue. Residues Asn222, Asn228, Asn240, Asn257, Asn262, Asn298, and Asn327 are each glycosylated (N-linked (GlcNAc...) asparagine). His365 acts as the Charge relay system in catalysis. An N-linked (GlcNAc...) asparagine glycan is attached at Asn406. Ser590 acts as the Charge relay system in catalysis. Residues Asn651, Asn663, Asn739, Asn792, Asn893, Asn908, Asn917, Asn929, Asn1048, Asn1056, Asn1084, Asn1117, Asn1133, Asn1140, Asn1148, Asn1208, Asn1233, Asn1237, and Asn1332 are each glycosylated (N-linked (GlcNAc...) asparagine).

Belongs to the peptidase S8 family. LWM pyrolysin seems to be produced by autoproteolytic activation of HMW pyrolysin. In terms of processing, glycosylated.

The protein localises to the cell envelope. Functionally, has endopeptidase activity toward caseins, casein fragments including alpha-S1-casein and synthetic peptides. This chain is Pyrolysin (pls), found in Pyrococcus furiosus (strain ATCC 43587 / DSM 3638 / JCM 8422 / Vc1).